The following is a 350-amino-acid chain: tRNA uridine(34) hydroxylase (350 aa).

The region spanning 146-240 (DDPDAVFIDM…YARRARAQGL (95 aa)) is the Rhodanese domain. Cysteine 200 serves as the catalytic Cysteine persulfide intermediate. The span at 319-328 (RRRRAGRENG) shows a compositional bias: basic and acidic residues. The segment at 319-350 (RRRRAGRENGNKIFNKSRGRLNSKLSIPDPAE) is disordered.

It belongs to the TrhO family.

The catalysed reaction is uridine(34) in tRNA + AH2 + O2 = 5-hydroxyuridine(34) in tRNA + A + H2O. Its function is as follows. Catalyzes oxygen-dependent 5-hydroxyuridine (ho5U) modification at position 34 in tRNAs. The protein is tRNA uridine(34) hydroxylase of Salmonella newport (strain SL254).